A 312-amino-acid chain; its full sequence is Protoheme IX farnesyltransferase (312 aa).

The next 8 helical transmembrane spans lie at 12-32 (LALTKPRVIELLLVATIPAML), 41-61 (FGLILLTLIGGWMGAGAANTF), 93-113 (VFAWVLLIASVLWLGFLCHSW), 114-134 (LAAGFIVLTNWFYVFVYTKWL), 141-161 (NVIWGGAAGCMPVIVGWAVIT), 168-188 (FHAGWSSWLQAIILFMIIFFW), 240-260 (VPAASWIYLAAALISGGWFII), and 290-310 (ILFVALSVDAVLGWQTLAHAV).

It belongs to the UbiA prenyltransferase family. Protoheme IX farnesyltransferase subfamily.

The protein resides in the cell membrane. It carries out the reaction heme b + (2E,6E)-farnesyl diphosphate + H2O = Fe(II)-heme o + diphosphate. It functions in the pathway porphyrin-containing compound metabolism; heme O biosynthesis; heme O from protoheme: step 1/1. In terms of biological role, converts heme B (protoheme IX) to heme O by substitution of the vinyl group on carbon 2 of heme B porphyrin ring with a hydroxyethyl farnesyl side group. The sequence is that of Protoheme IX farnesyltransferase from Corynebacterium jeikeium (strain K411).